Consider the following 617-residue polypeptide: Dihydroxy-acid dehydratase (617 aa).

Aspartate 81 lines the Mg(2+) pocket. Cysteine 122 is a [2Fe-2S] cluster binding site. Mg(2+) contacts are provided by aspartate 123 and lysine 124. Residue lysine 124 is modified to N6-carboxylysine. Cysteine 195 lines the [2Fe-2S] cluster pocket. A Mg(2+)-binding site is contributed by glutamate 491. Serine 517 acts as the Proton acceptor in catalysis.

It belongs to the IlvD/Edd family. In terms of assembly, homodimer. The cofactor is [2Fe-2S] cluster. It depends on Mg(2+) as a cofactor.

It carries out the reaction (2R)-2,3-dihydroxy-3-methylbutanoate = 3-methyl-2-oxobutanoate + H2O. The catalysed reaction is (2R,3R)-2,3-dihydroxy-3-methylpentanoate = (S)-3-methyl-2-oxopentanoate + H2O. Its pathway is amino-acid biosynthesis; L-isoleucine biosynthesis; L-isoleucine from 2-oxobutanoate: step 3/4. It participates in amino-acid biosynthesis; L-valine biosynthesis; L-valine from pyruvate: step 3/4. Its function is as follows. Functions in the biosynthesis of branched-chain amino acids. Catalyzes the dehydration of (2R,3R)-2,3-dihydroxy-3-methylpentanoate (2,3-dihydroxy-3-methylvalerate) into 2-oxo-3-methylpentanoate (2-oxo-3-methylvalerate) and of (2R)-2,3-dihydroxy-3-methylbutanoate (2,3-dihydroxyisovalerate) into 2-oxo-3-methylbutanoate (2-oxoisovalerate), the penultimate precursor to L-isoleucine and L-valine, respectively. This is Dihydroxy-acid dehydratase from Buchnera aphidicola subsp. Diuraphis noxia.